We begin with the raw amino-acid sequence, 247 residues long: Adenosine 5'-phosphosulfate reductase (247 aa).

[4Fe-4S] cluster-binding residues include cysteine 133, cysteine 134, cysteine 216, and cysteine 219. Residues 222-247 (KPAPGSDPRSGRWAGASKTECGLHAS) are disordered. The Nucleophile; cysteine thiosulfonate intermediate role is filled by cysteine 242.

It belongs to the PAPS reductase family. CysH subfamily. [4Fe-4S] cluster serves as cofactor.

Its subcellular location is the cytoplasm. It catalyses the reaction [thioredoxin]-disulfide + sulfite + AMP + 2 H(+) = adenosine 5'-phosphosulfate + [thioredoxin]-dithiol. It participates in sulfur metabolism; hydrogen sulfide biosynthesis; sulfite from sulfate. In terms of biological role, catalyzes the formation of sulfite from adenosine 5'-phosphosulfate (APS) using thioredoxin as an electron donor. The sequence is that of Adenosine 5'-phosphosulfate reductase from Rhodococcus erythropolis (strain PR4 / NBRC 100887).